The chain runs to 488 residues: 3-octaprenyl-4-hydroxybenzoate carboxy-lyase (488 aa).

Asn-172 contacts Mn(2+). Prenylated FMN is bound by residues 175–177 (IYR), 189–191 (RWL), and 194–195 (RG). A Mn(2+)-binding site is contributed by Glu-238. The Proton donor role is filled by Asp-287.

Belongs to the UbiD family. Homohexamer. Prenylated FMN is required as a cofactor. Mn(2+) serves as cofactor.

It localises to the cell membrane. It carries out the reaction a 4-hydroxy-3-(all-trans-polyprenyl)benzoate + H(+) = a 2-(all-trans-polyprenyl)phenol + CO2. Its pathway is cofactor biosynthesis; ubiquinone biosynthesis. Functionally, catalyzes the decarboxylation of 3-octaprenyl-4-hydroxy benzoate to 2-octaprenylphenol, an intermediate step in ubiquinone biosynthesis. The polypeptide is 3-octaprenyl-4-hydroxybenzoate carboxy-lyase (Azotobacter vinelandii (strain DJ / ATCC BAA-1303)).